A 622-amino-acid chain; its full sequence is Mitochondrial distribution and morphology protein 34 (622 aa).

In terms of domain architecture, SMP-LTD spans 1–204 (MSFKVNWNSL…LPTLIHQLSL (204 aa)). 3 disordered regions span residues 364–393 (YSNK…DNTV), 442–468 (LETM…RAYQ), and 572–592 (LDGG…NFRP). Residues 372–385 (KPKRRRIKVHKKSK) show a composition bias toward basic residues. Positions 446–455 (STGSSSSASS) are enriched in low complexity. The span at 577 to 587 (NSANTNNSSGG) shows a compositional bias: polar residues.

Belongs to the MDM34 family. Component of the ER-mitochondria encounter structure (ERMES) or MDM complex, composed of MMM1, MDM10, MDM12 and MDM34.

It localises to the mitochondrion outer membrane. Its function is as follows. Component of the ERMES/MDM complex, which serves as a molecular tether to connect the endoplasmic reticulum (ER) and mitochondria. Components of this complex are involved in the control of mitochondrial shape and protein biogenesis, and function in nonvesicular lipid trafficking between the ER and mitochondria. MDM34 is required for the interaction of the ER-resident membrane protein MMM1 and the outer mitochondrial membrane-resident beta-barrel protein MDM10. In Candida albicans (strain WO-1) (Yeast), this protein is Mitochondrial distribution and morphology protein 34.